Reading from the N-terminus, the 444-residue chain is Phosphoglucosamine mutase (444 aa).

Catalysis depends on serine 100, which acts as the Phosphoserine intermediate. Mg(2+) contacts are provided by serine 100, aspartate 234, aspartate 236, and aspartate 238. Phosphoserine is present on serine 100.

It belongs to the phosphohexose mutase family. Mg(2+) is required as a cofactor. Activated by phosphorylation.

The enzyme catalyses alpha-D-glucosamine 1-phosphate = D-glucosamine 6-phosphate. Catalyzes the conversion of glucosamine-6-phosphate to glucosamine-1-phosphate. The polypeptide is Phosphoglucosamine mutase (Rubrobacter xylanophilus (strain DSM 9941 / JCM 11954 / NBRC 16129 / PRD-1)).